We begin with the raw amino-acid sequence, 157 residues long: Ribonuclease H (157 aa).

The RNase H type-1 domain maps to 1–146 (MPELFAYTDG…ADALAREGMA (146 aa)). Residues Asp9, Glu52, Asp74, and Asp138 each contribute to the Mg(2+) site.

Belongs to the RNase H family. Monomer. It depends on Mg(2+) as a cofactor.

It is found in the cytoplasm. It catalyses the reaction Endonucleolytic cleavage to 5'-phosphomonoester.. Functionally, endonuclease that specifically degrades the RNA of RNA-DNA hybrids. The sequence is that of Ribonuclease H from Dinoroseobacter shibae (strain DSM 16493 / NCIMB 14021 / DFL 12).